Consider the following 39-residue polypeptide: Potassium channel toxin alpha-KTx 2.23 (39 aa).

3 disulfide bridges follow: C7–C29, C13–C34, and C17–C36.

In terms of tissue distribution, expressed by the venom gland.

It is found in the secreted. Its function is as follows. Blocks human voltage-gated potassium (Kv) channels Kv1.1/KCNA1, Kv1.2/KCNA2 and Kv1.3/KCNA3. In Centruroides bonito (Scorpion), this protein is Potassium channel toxin alpha-KTx 2.23.